The chain runs to 464 residues: Mitogen-activated protein kinase 10 (464 aa).

The region spanning 64–359 is the Protein kinase domain; that stretch reads YQNLKPIGSG…VDDALQHPYI (296 aa). ATP contacts are provided by residues 70–78 and Lys93; that span reads IGSGAQGIV. The active-site Proton acceptor is the Asp189. A Phosphothreonine; by MAP2K7 modification is found at Thr221. The short motif at 221–223 is the TXY element; sequence TPY. The residue at position 223 (Tyr223) is a Phosphotyrosine; by MAP2K4. Positions 405-464 are disordered; the sequence is TKNGVVKGQPSPSGAAVNSSESLPPSSSVNDISSMSTDQTLASDTDSSLEASAGPLGCCR. Residues 423–432 show a composition bias toward low complexity; that stretch reads SSESLPPSSS. A compositionally biased stretch (polar residues) spans 433–454; the sequence is VNDISSMSTDQTLASDTDSSLE. S-palmitoyl cysteine attachment occurs at residues Cys462 and Cys463.

The protein belongs to the protein kinase superfamily. CMGC Ser/Thr protein kinase family. MAP kinase subfamily. Interacts with MAPK8IP1/JIP-1 and MAPK8IP3/JIP-3/JSAP1. Interacts with SPAG9/MAPK8IP4/JIP4. Interacts with HDAC9 and MAPKBP1. Interacts with ARRB2; the interaction enhances MAPK10 activation by MAP3K5. Interacts with SARM1. Interacts with JUND; interaction is inhibited in the presence of MEN1. Mg(2+) is required as a cofactor. Post-translationally, dually phosphorylated on Thr-221 and Tyr-223 by MAP2K4 and MAP2K7, which activates the enzyme. MAP2K7 shows a strong preference for Thr-221 while MAP2K4 phosphorylates Tyr-223 preferentially. Weakly autophosphorylated on threonine and tyrosine residues in vitro. In terms of processing, palmitoylation regulates subcellular location and axonal development.

It localises to the cytoplasm. Its subcellular location is the membrane. It is found in the nucleus. The protein resides in the mitochondrion. The catalysed reaction is L-seryl-[protein] + ATP = O-phospho-L-seryl-[protein] + ADP + H(+). It carries out the reaction L-threonyl-[protein] + ATP = O-phospho-L-threonyl-[protein] + ADP + H(+). With respect to regulation, activated by threonine and tyrosine phosphorylation by two dual specificity kinases, MAP2K4 and MAP2K7. MAP2K7 phosphorylates MAPK10 on Thr-221 causing a conformational change and a large increase in Vmax for the enzyme. MAP2K4 then phosphorylates Tyr-223 resulting in a further increase in Vmax. Inhibited by dual specificity phosphatases, such as DUSP1. Inhibited by HDAC9. Functionally, serine/threonine-protein kinase involved in various processes such as neuronal proliferation, differentiation, migration and programmed cell death. Extracellular stimuli such as pro-inflammatory cytokines or physical stress stimulate the stress-activated protein kinase/c-Jun N-terminal kinase (SAP/JNK) signaling pathway. In this cascade, two dual specificity kinases MAP2K4/MKK4 and MAP2K7/MKK7 phosphorylate and activate MAPK10/JNK3. In turn, MAPK10/JNK3 phosphorylates a number of transcription factors, primarily components of AP-1 such as JUN and ATF2 and thus regulates AP-1 transcriptional activity. Plays regulatory roles in the signaling pathways during neuronal apoptosis. Phosphorylates the neuronal microtubule regulator STMN2. Acts in the regulation of the amyloid-beta precursor protein/APP signaling during neuronal differentiation by phosphorylating APP. Also participates in neurite growth in spiral ganglion neurons. Phosphorylates the CLOCK-BMAL1 heterodimer and plays a role in the photic regulation of the circadian clock. Phosphorylates JUND and this phosphorylation is inhibited in the presence of MEN1. This Rattus norvegicus (Rat) protein is Mitogen-activated protein kinase 10 (Mapk10).